The sequence spans 458 residues: tRNA modification GTPase MnmE (458 aa).

(6S)-5-formyl-5,6,7,8-tetrahydrofolate is bound by residues R23, E87, and R126. The 157-residue stretch at 224–380 folds into the TrmE-type G domain; the sequence is GLSMVIVGKP…LKSKIKDLFF (157 aa). N234 serves as a coordination point for K(+). GTP-binding positions include 234–239, 253–259, and 278–281; these read NVGKSS, TDIAGTT, and DTAG. Mg(2+) is bound at residue S238. K(+) contacts are provided by T253, I255, and T258. T259 provides a ligand contact to Mg(2+). K458 is a binding site for (6S)-5-formyl-5,6,7,8-tetrahydrofolate.

It belongs to the TRAFAC class TrmE-Era-EngA-EngB-Septin-like GTPase superfamily. TrmE GTPase family. Homodimer. Heterotetramer of two MnmE and two MnmG subunits. It depends on K(+) as a cofactor.

It localises to the cytoplasm. Exhibits a very high intrinsic GTPase hydrolysis rate. Involved in the addition of a carboxymethylaminomethyl (cmnm) group at the wobble position (U34) of certain tRNAs, forming tRNA-cmnm(5)s(2)U34. This is tRNA modification GTPase MnmE from Clostridium perfringens (strain ATCC 13124 / DSM 756 / JCM 1290 / NCIMB 6125 / NCTC 8237 / Type A).